The chain runs to 245 residues: Uridylate kinase (245 aa).

12–15 (KISG) provides a ligand contact to ATP. G55 serves as a coordination point for UMP. G56 and R60 together coordinate ATP. Residues D76 and 137–144 (AGAPYLTT) contribute to the UMP site. Positions 164, 171, and 174 each coordinate ATP.

Belongs to the UMP kinase family. As to quaternary structure, homohexamer.

Its subcellular location is the cytoplasm. It catalyses the reaction UMP + ATP = UDP + ADP. It participates in pyrimidine metabolism; CTP biosynthesis via de novo pathway; UDP from UMP (UMPK route): step 1/1. Inhibited by UTP. Catalyzes the reversible phosphorylation of UMP to UDP. This is Uridylate kinase from Chlamydia muridarum (strain MoPn / Nigg).